A 493-amino-acid polypeptide reads, in one-letter code: MAALLVFFSVSLILLAVLFHKRKSSLSSRKRPPPSPLRLPVIGHFHLIGALSHRSFTSLSKRYGEVMLLHFGSAPVLVASSAAAAREIMKNQDVIFASRPRLSIFDRLMYSGKGVAFAPYGEHWRNARSMCMLQLLSAKRVQSFGGIREEETSAMIEKIRRSKPTTVVNLSEMFMALTNGVIHRAVLGRKGDGGDDFNRILIKVIKLLGSFNVGDYVPWLSWINRINGVDAEVEKVGTKLDGSMEGILRKYRRKKVGDDETNFVDTLLQFQRESKDTDPVEDDVIKALIFDMVSAGTDTTFAALEWTMAELIKNPRTLKTLQNEVREVSRNKGGITEDDVDKMPYLKAVSKEILRLHPPFAILLPRELTQDANMLGYDIPRGTVVLVNNWAISRDPSLWENPEEFRPERFLETSIDYKGLHFEMLPFGSGRRGCPGSTFAMALYELALSKLVNEFDFRLGNGDRAEDLDMTEAPGFVVHKKSPLLVLATPRQS.

Position 1 (M1) is a topological domain, cytoplasmic. The helical; Signal-anchor for type II membrane protein transmembrane segment at 2–19 (AALLVFFSVSLILLAVLF) threads the bilayer. Topologically, residues 20–493 (HKRKSSLSSR…LLVLATPRQS (474 aa)) are lumenal. N169 is a glycosylation site (N-linked (GlcNAc...) asparagine). C434 serves as a coordination point for heme.

This sequence belongs to the cytochrome P450 family. Heme is required as a cofactor.

It localises to the membrane. The enzyme catalyses (R)-pulegone + reduced [NADPH--hemoprotein reductase] + O2 = (R)-menthofuran + oxidized [NADPH--hemoprotein reductase] + 2 H2O + H(+). It participates in secondary metabolite biosynthesis; terpenoid biosynthesis. Monoterpene synthase that catalyzes the formation of (+)-menthofuran from (+)-pulegone. This is (+)-menthofuran synthase from Mentha piperita (Peppermint).